We begin with the raw amino-acid sequence, 127 residues long: Ribonuclease VapC9 (127 aa).

Residues 2–115 enclose the PINc domain; sequence IVVDASAALA…VTADLRLSDT (114 aa). Mg(2+) is bound by residues aspartate 5 and aspartate 91.

Belongs to the PINc/VapC protein family. The cofactor is Mg(2+).

Functionally, toxic component of a type II toxin-antitoxin (TA) system. An RNase. The cognate antitoxin is VapB9. The polypeptide is Ribonuclease VapC9 (Mycobacterium tuberculosis (strain CDC 1551 / Oshkosh)).